We begin with the raw amino-acid sequence, 92 residues long: MPRSLKKGPFVDEHLLNKVDAQNEKGTKQVIKTWSRRSTILPDFIGHTFAVHDGRKHVPVFVDDAMVGHKLGEFAPTKTFKGHVKDDKKGRR.

Belongs to the universal ribosomal protein uS19 family.

Its function is as follows. Protein S19 forms a complex with S13 that binds strongly to the 16S ribosomal RNA. This is Small ribosomal subunit protein uS19 from Corynebacterium efficiens (strain DSM 44549 / YS-314 / AJ 12310 / JCM 11189 / NBRC 100395).